Consider the following 198-residue polypeptide: Glycerol-3-phosphate acyltransferase (198 aa).

The next 6 membrane-spanning stretches (helical) occupy residues 1–21, 53–73, 79–99, 111–131, 136–156, and 158–178; these read MNLL…GYLA, IIVF…AKYL, WQVA…WLNW, IFLG…IIMI, IVSL…FLSF, and GSNI…LVIW.

This sequence belongs to the PlsY family. Probably interacts with PlsX.

Its subcellular location is the cell inner membrane. The catalysed reaction is an acyl phosphate + sn-glycerol 3-phosphate = a 1-acyl-sn-glycero-3-phosphate + phosphate. It participates in lipid metabolism; phospholipid metabolism. In terms of biological role, catalyzes the transfer of an acyl group from acyl-phosphate (acyl-PO(4)) to glycerol-3-phosphate (G3P) to form lysophosphatidic acid (LPA). This enzyme utilizes acyl-phosphate as fatty acyl donor, but not acyl-CoA or acyl-ACP. This Prochlorococcus marinus (strain NATL1A) protein is Glycerol-3-phosphate acyltransferase.